Reading from the N-terminus, the 577-residue chain is Outer spore wall assembly protein SHE10 (577 aa).

Residues methionine 1–glutamate 23 form the signal peptide. 2 coiled-coil regions span residues asparagine 379 to glutamate 416 and isoleucine 513 to valine 561. Positions arginine 525–arginine 545 are enriched in basic and acidic residues. The interval arginine 525–leucine 577 is disordered. Positions serine 562 to leucine 577 are enriched in low complexity.

Belongs to the SHE10 family. As to quaternary structure, component of the mitochondria-localized RNase mitochondrial RNA-processing (RNase MRP) composed of one single RNA encoded by the NME1 gene and at least 31 proteins. Absent in the nucleus-localized RNase MRP (NuMRP).

Its subcellular location is the mitochondrion. Its function is as follows. Involved in spore wall assembly. May be a component of the mitochondrial RNase MRP (MtMRP), a ribonucleoprotein endoribonuclease involved in the cleaving RNA transcripts to generate primers for DNA replication in mitochondria. The chain is Outer spore wall assembly protein SHE10 from Saccharomyces cerevisiae (strain YJM789) (Baker's yeast).